Consider the following 68-residue polypeptide: Large ribosomal subunit protein bL32 (68 aa).

Belongs to the bacterial ribosomal protein bL32 family.

This is Large ribosomal subunit protein bL32 from Orientia tsutsugamushi (strain Boryong) (Rickettsia tsutsugamushi).